A 1046-amino-acid polypeptide reads, in one-letter code: Suppressor of Mek1 (1046 aa).

Positions 1-101 (MEPLRKRVKV…QDIWENILQY (101 aa)) constitute a WH1 domain. Residues 626–1046 (FESPETSCNN…SSPTPSELHV (421 aa)) are disordered. The span at 665-689 (IDEEEEEAYFNRDDDSEDSDDEDEL) shows a compositional bias: acidic residues. The span at 695–713 (NNNNNNNNNNKQICTNNEN) shows a compositional bias: low complexity. Basic and acidic residues predominate over residues 714-727 (NMEKNDDNIEKDNE). Residues 743-752 (YEDEDDEDDE) are compositionally biased toward acidic residues. Over residues 753–783 (INKSVESDDIVEKHEIIDKNEKKDEIMKENN) the composition is skewed to basic and acidic residues. Positions 784 to 803 (DSDNDDNDNNDNDNDNDNNS) are enriched in acidic residues. Positions 804 to 820 (DIENKNHLNNNGNNENN) are enriched in low complexity. 2 stretches are compositionally biased toward basic and acidic residues: residues 826–855 (VQDK…KENL) and 862–876 (EKVK…KKEN). Positions 889–905 (SNNSNNNNNNNNNNSNN) are enriched in low complexity. Over residues 909–935 (GDNRKTTPKRKLDYEKNESVVSKKIDK) the composition is skewed to basic and acidic residues. A compositionally biased stretch (low complexity) spans 958 to 995 (NNNNSNNNNNNNNNNNNNNNNNNNNNNNNNNNNNNNQN). Acidic residues predominate over residues 996 to 1011 (DENELSSASEEEEEQL). The Nuclear localization signal signature appears at 1003 to 1022 (ASEEEEEQLENGKHIKKFKR). Low complexity predominate over residues 1028-1038 (NNSSNNSNNSS).

It belongs to the SMEK family. In terms of assembly, interacts with ppp4c.

The protein localises to the cytoplasm. Its subcellular location is the cell cortex. It localises to the nucleus. Suppresses MEK1 null cell polarity, chemotaxis, and gene expression defects. Required for proper cytokinesis during vegetative growth, timely exit from the mound stage during development, and myosin II assembly. May be a regulatory subunit of serine/threonine-protein phosphatase 4 (PP4) and may control localization of PP4 to the nucleus. Involved in the regulation of some ppp4c functions, such as developmental progression, chemotaxis, expression of stress response genes and cell movement. This Dictyostelium discoideum (Social amoeba) protein is Suppressor of Mek1 (smkA).